Here is a 95-residue protein sequence, read N- to C-terminus: EFRFVRWHDVSTDVLPAGGSKAEGIRLMIEKLGIDKGDVYAFGDGLNDIEMLSFVGTGVAMGNAHEEVKRVADFVTKPVSEEGIWHGLKQLQLIP.

Residue lysine 21 coordinates phosphate. Aspartate 44 serves as a coordination point for Mg(2+). Asparagine 47 provides a ligand contact to phosphate.

The protein belongs to the HAD-like hydrolase superfamily. Cof family. It depends on Mg(2+) as a cofactor.

This is an uncharacterized protein from Geobacillus stearothermophilus (Bacillus stearothermophilus).